The following is a 137-amino-acid chain: Large ribosomal subunit protein uL16 (137 aa).

It belongs to the universal ribosomal protein uL16 family. As to quaternary structure, part of the 50S ribosomal subunit.

In terms of biological role, binds 23S rRNA and is also seen to make contacts with the A and possibly P site tRNAs. The sequence is that of Large ribosomal subunit protein uL16 from Sinorhizobium medicae (strain WSM419) (Ensifer medicae).